The sequence spans 168 residues: Small ribosomal subunit protein uS5 (168 aa).

Residues 13-76 (LKEQVVDIKR…EDAKKNLIHV (64 aa)) form the S5 DRBM domain.

It belongs to the universal ribosomal protein uS5 family. In terms of assembly, part of the 30S ribosomal subunit. Contacts proteins S4 and S8.

Its function is as follows. With S4 and S12 plays an important role in translational accuracy. In terms of biological role, located at the back of the 30S subunit body where it stabilizes the conformation of the head with respect to the body. This Alkaliphilus oremlandii (strain OhILAs) (Clostridium oremlandii (strain OhILAs)) protein is Small ribosomal subunit protein uS5.